Consider the following 382-residue polypeptide: 2-epi-valiolone synthase (382 aa).

Residues Glu92 to Lys95, Gly124 to Asp128, Thr148 to Thr149, Lys161, Lys170, and His188 to Thr191 contribute to the NAD(+) site. Zn(2+) is bound by residues Glu203, His266, and His283.

The protein belongs to the sugar phosphate cyclases superfamily. EVS family. It depends on NAD(+) as a cofactor. Requires Co(2+) as cofactor. The cofactor is Zn(2+).

The catalysed reaction is D-sedoheptulose 7-phosphate = 2-epi-valiolone + phosphate. Functionally, catalyzes the conversion of sedoheptulose 7-phosphate to 2-epi-valiolone, which may serve as an alternative precursor for aminocyclitol biosynthesis. This is 2-epi-valiolone synthase from Actinosynnema mirum (strain ATCC 29888 / DSM 43827 / JCM 3225 / NBRC 14064 / NCIMB 13271 / NRRL B-12336 / IMRU 3971 / 101).